Here is an 88-residue protein sequence, read N- to C-terminus: MRESNTLSGGIFALLNRAIGSVLLALIGFYRTWLSPLLGPHCRFIPSCSAYGLEAIQRHGPWRGGWLTLRRLSRCHPFTPCGCDPVPD.

Belongs to the UPF0161 family.

Its subcellular location is the cell inner membrane. Functionally, could be involved in insertion of integral membrane proteins into the membrane. This Prochlorococcus marinus (strain MIT 9313) protein is Putative membrane protein insertion efficiency factor.